Here is a 445-residue protein sequence, read N- to C-terminus: Neuropeptide Y receptor type 5 (445 aa).

Residues 1–42 lie on the Extracellular side of the membrane; that stretch reads MDLELDEYYNKTLATENNTAATRNSDFPVWDDYKSSVDDLQY. 2 N-linked (GlcNAc...) asparagine glycosylation sites follow: Asn10 and Asn17. A helical transmembrane segment spans residues 43-63; sequence FLIGLYTFVSLLGFMGNLLIL. At 64–77 the chain is on the cytoplasmic side; sequence MALMKKRNQKTTVN. Residues 78-98 form a helical membrane-spanning segment; sequence FLIGNLAFSDILVVLFCSPFT. Topologically, residues 99–117 are extracellular; sequence LTSVLLDQWMFGKVMCHIM. A disulfide bridge connects residues Cys114 and Cys198. The chain crosses the membrane as a helical span at residues 118 to 138; that stretch reads PFLQCVSVLVSTLILISIAIV. The Cytoplasmic portion of the chain corresponds to 139 to 156; sequence RYHMIKHPISNNLTANHG. A helical transmembrane segment spans residues 157-177; sequence YFLIATVWTLGFAICSPLPVF. The Extracellular portion of the chain corresponds to 178-208; the sequence is HSLVELQETFGSALLSSRYLCVESWPSDSYR. The helical transmembrane segment at 209–229 threads the bilayer; it reads IAFTISLLLVQYILPLVCLTV. The Cytoplasmic portion of the chain corresponds to 230-369; the sequence is SHTSVCRSIS…KKRSRSVFYR (140 aa). A helical membrane pass occupies residues 370–390; the sequence is LTILILVFAVSWMPLHLFHVV. Residues 391-407 lie on the Extracellular side of the membrane; it reads TDFNDNLISNRHFKLVY. The chain crosses the membrane as a helical span at residues 408-428; that stretch reads CICHLLGMMSCCLNPILYGFL. Over 429–445 the chain is Cytoplasmic; that stretch reads NNGIKADLVSLIHCLHM. Residue Cys442 is the site of S-palmitoyl cysteine attachment.

This sequence belongs to the G-protein coupled receptor 1 family. In terms of tissue distribution, brain; hypothalamus.

It is found in the cell membrane. Functionally, receptor for neuropeptide Y and peptide YY. The activity of this receptor is mediated by G proteins that inhibit adenylate cyclase activity. Seems to be associated with food intake. Could be involved in feeding disorders. The protein is Neuropeptide Y receptor type 5 (NPY5R) of Homo sapiens (Human).